We begin with the raw amino-acid sequence, 205 residues long: Type-4 uracil-DNA glycosylase (205 aa).

[4Fe-4S] cluster is bound by residues Cys13 and Cys16. Residues 40-42, Phe54, and Asn80 contribute to the uracil site; that span reads GEG. [4Fe-4S] cluster contacts are provided by Cys84 and Cys100. Residue His155 coordinates uracil.

This sequence belongs to the uracil-DNA glycosylase (UDG) superfamily. Type 4 (UDGa) family. Monomer.

The catalysed reaction is Hydrolyzes single-stranded DNA or mismatched double-stranded DNA and polynucleotides, releasing free uracil.. Product-inhibited by apurinic/apyrimidinic sites. In terms of biological role, removes uracil bases that are present in DNA as a result of either deamination of cytosine or misincorporation of dUMP instead of dTMP. Can remove uracil from double-stranded DNA containing either a U/G, U/A, U/C or U/T base pair as well as from single-stranded DNA. Specifically recognizes uracil that is flipped out from double-stranded DNA. The protein is Type-4 uracil-DNA glycosylase of Thermus thermophilus (strain ATCC 27634 / DSM 579 / HB8).